The sequence spans 518 residues: Cytochrome P450 1A1 (518 aa).

The tract at residues 33 to 44 (SKPRVPKGLKRL) is mitochondrial targeting signal. Residue serine 71 is glycosylated (O-linked (GlcNAc) serine). Phenylalanine 228 is a binding site for substrate. Cysteine 461 lines the heme pocket.

Belongs to the cytochrome P450 family. In terms of assembly, interacts with cytosolic chaperones HSP70 and HSP90; this interaction is required for initial targeting to mitochondria. Interacts (via mitochondrial targeting signal) with TOMM40 (via N-terminus); this interaction is required for translocation across the mitochondrial outer membrane. It depends on heme as a cofactor.

Its subcellular location is the endoplasmic reticulum membrane. The protein localises to the mitochondrion inner membrane. It localises to the microsome membrane. The protein resides in the cytoplasm. It carries out the reaction an organic molecule + reduced [NADPH--hemoprotein reductase] + O2 = an alcohol + oxidized [NADPH--hemoprotein reductase] + H2O + H(+). It catalyses the reaction estrone + reduced [NADPH--hemoprotein reductase] + O2 = 2-hydroxyestrone + oxidized [NADPH--hemoprotein reductase] + H2O + H(+). The enzyme catalyses estrone + reduced [NADPH--hemoprotein reductase] + O2 = 4-hydroxyestrone + oxidized [NADPH--hemoprotein reductase] + H2O + H(+). The catalysed reaction is estrone + reduced [NADPH--hemoprotein reductase] + O2 = 6alpha-hydroxyestrone + oxidized [NADPH--hemoprotein reductase] + H2O + H(+). It carries out the reaction estrone + reduced [NADPH--hemoprotein reductase] + O2 = 15alpha-hydroxyestrone + oxidized [NADPH--hemoprotein reductase] + H2O + H(+). It catalyses the reaction estrone + reduced [NADPH--hemoprotein reductase] + O2 = 16alpha-hydroxyestrone + oxidized [NADPH--hemoprotein reductase] + H2O + H(+). The enzyme catalyses 17beta-estradiol + reduced [NADPH--hemoprotein reductase] + O2 = 2-hydroxy-17beta-estradiol + oxidized [NADPH--hemoprotein reductase] + H2O + H(+). The catalysed reaction is 17beta-estradiol + reduced [NADPH--hemoprotein reductase] + O2 = 4-hydroxy-17beta-estradiol + oxidized [NADPH--hemoprotein reductase] + H2O + H(+). It carries out the reaction 17beta-estradiol + reduced [NADPH--hemoprotein reductase] + O2 = 6alpha-hydroxy-17beta-estradiol + oxidized [NADPH--hemoprotein reductase] + H2O + H(+). It catalyses the reaction 17beta-estradiol + reduced [NADPH--hemoprotein reductase] + O2 = 7alpha-hydroxy-17beta-estradiol + oxidized [NADPH--hemoprotein reductase] + H2O + H(+). The enzyme catalyses 17beta-estradiol + reduced [NADPH--hemoprotein reductase] + O2 = 15alpha-hydroxy-17beta-estradiol + oxidized [NADPH--hemoprotein reductase] + H2O + H(+). The catalysed reaction is (5Z,8Z,11Z)-eicosatrienoate + reduced [NADPH--hemoprotein reductase] + O2 = 19-hydroxy-(5Z,8Z,11Z)-eicosatrienoate + oxidized [NADPH--hemoprotein reductase] + H2O + H(+). It carries out the reaction (5Z,8Z,11Z,14Z)-eicosatetraenoate + reduced [NADPH--hemoprotein reductase] + O2 = 16-hydroxy-(5Z,8Z,11Z,14Z)-eicosatetraenoate + oxidized [NADPH--hemoprotein reductase] + H2O + H(+). It catalyses the reaction (5Z,8Z,11Z,14Z)-eicosatetraenoate + reduced [NADPH--hemoprotein reductase] + O2 = 17-hydroxy-(5Z,8Z,11Z,14Z)-eicosatetraenoate + oxidized [NADPH--hemoprotein reductase] + H2O + H(+). The enzyme catalyses (5Z,8Z,11Z,14Z)-eicosatetraenoate + reduced [NADPH--hemoprotein reductase] + O2 = 18-hydroxy-(5Z,8Z,11Z,14Z)-eicosatetraenoate + oxidized [NADPH--hemoprotein reductase] + H2O + H(+). The catalysed reaction is (5Z,8Z,11Z,14Z)-eicosatetraenoate + reduced [NADPH--hemoprotein reductase] + O2 = 19-hydroxy-(5Z,8Z,11Z,14Z)-eicosatetraenoate + oxidized [NADPH--hemoprotein reductase] + H2O + H(+). It carries out the reaction (5Z,8Z,11Z,14Z,17Z)-eicosapentaenoate + reduced [NADPH--hemoprotein reductase] + O2 = 19-hydroxy-(5Z,8Z,11Z,14Z,17Z)-eicosapentaenoate + oxidized [NADPH--hemoprotein reductase] + H2O + H(+). It catalyses the reaction (5Z,8Z,11Z,14Z)-eicosatetraenoate + reduced [NADPH--hemoprotein reductase] + O2 = (8R,9S)-epoxy-(5Z,11Z,14Z)-eicosatrienoate + oxidized [NADPH--hemoprotein reductase] + H2O + H(+). The enzyme catalyses (5Z,8Z,11Z,14Z)-eicosatetraenoate + reduced [NADPH--hemoprotein reductase] + O2 = (11R,12S)-epoxy-(5Z,8Z,14Z)-eicosatrienoate + oxidized [NADPH--hemoprotein reductase] + H2O + H(+). The catalysed reaction is (5Z,8Z,11Z,14Z)-eicosatetraenoate + reduced [NADPH--hemoprotein reductase] + O2 = (14S,15R)-epoxy-(5Z,8Z,11Z)-eicosatrienoate + oxidized [NADPH--hemoprotein reductase] + H2O + H(+). It carries out the reaction (5Z,8Z,11Z,14Z)-eicosatetraenoate + reduced [NADPH--hemoprotein reductase] + O2 = (14R,15S)-epoxy-(5Z,8Z,11Z)-eicosatrienoate + oxidized [NADPH--hemoprotein reductase] + H2O + H(+). It catalyses the reaction (5Z,8Z,11Z,14Z,17Z)-eicosapentaenoate + reduced [NADPH--hemoprotein reductase] + O2 = (17R,18S)-epoxy-(5Z,8Z,11Z,14Z)-eicosatetraenoate + oxidized [NADPH--hemoprotein reductase] + H2O + H(+). The enzyme catalyses (4Z,7Z,10Z,13Z,16Z,19Z)-docosahexaenoate + reduced [NADPH--hemoprotein reductase] + O2 = (19S,20R)-epoxy-(4Z,7Z,10Z,13Z,16Z)-docosapentaenoate + oxidized [NADPH--hemoprotein reductase] + H2O + H(+). The catalysed reaction is (4Z,7Z,10Z,13Z,16Z,19Z)-docosahexaenoate + reduced [NADPH--hemoprotein reductase] + O2 = (19R,20S)-epoxy-(4Z,7Z,10Z,13Z,16Z)-docosapentaenoate + oxidized [NADPH--hemoprotein reductase] + H2O + H(+). It carries out the reaction all-trans-retinol + reduced [NADPH--hemoprotein reductase] + O2 = all-trans-retinal + oxidized [NADPH--hemoprotein reductase] + 2 H2O + H(+). It catalyses the reaction all-trans-retinal + reduced [NADPH--hemoprotein reductase] + O2 = all-trans-retinoate + oxidized [NADPH--hemoprotein reductase] + H2O + 2 H(+). The enzyme catalyses (13S)-hydroperoxy-(9Z,11E)-octadecadienoate = 13-oxo-(9Z,11E)-octadecadienoate + H2O. The catalysed reaction is (12S)-hydroperoxy-(5Z,8Z,10E,14Z)-eicosatetraenoate = 12-oxo-(5Z,8Z,10E,14Z)-eicosatetraenoate + H2O. It carries out the reaction (15S)-hydroperoxy-(5Z,8Z,11Z,13E)-eicosatetraenoate = 15-oxo-(5Z,8Z,11Z,13E)-eicosatetraenoate + H2O. It catalyses the reaction (5S)-hydroperoxy-(6E,8Z,11Z,14Z)-eicosatetraenoate = 5-oxo-(6E,8Z,11Z,14Z)-eicosatetraenoate + H2O. It participates in steroid hormone biosynthesis. Its pathway is lipid metabolism; fatty acid metabolism. The protein operates within cofactor metabolism; retinol metabolism. Its function is as follows. A cytochrome P450 monooxygenase involved in the metabolism of various endogenous substrates, including fatty acids, steroid hormones and vitamins. Mechanistically, uses molecular oxygen inserting one oxygen atom into a substrate, and reducing the second into a water molecule, with two electrons provided by NADPH via cytochrome P450 reductase (CPR; NADPH-ferrihemoprotein reductase). Catalyzes the hydroxylation of carbon-hydrogen bonds. Exhibits high catalytic activity for the formation of hydroxyestrogens from estrone (E1) and 17beta-estradiol (E2), namely 2-hydroxy E1 and E2, as well as D-ring hydroxylated E1 and E2 at the C15alpha and C16alpha positions. Displays different regioselectivities for polyunsaturated fatty acids (PUFA) hydroxylation. Catalyzes the epoxidation of double bonds of certain PUFA. Converts arachidonic acid toward epoxyeicosatrienoic acid (EET) regioisomers, 8,9-, 11,12-, and 14,15-EET, that function as lipid mediators in the vascular system. Displays an absolute stereoselectivity in the epoxidation of eicosapentaenoic acid (EPA) producing the 17(R),18(S) enantiomer. May play an important role in all-trans retinoic acid biosynthesis in extrahepatic tissues. Catalyzes two successive oxidative transformation of all-trans retinol to all-trans retinal and then to the active form all-trans retinoic acid. May also participate in eicosanoids metabolism by converting hydroperoxide species into oxo metabolites (lipoxygenase-like reaction, NADPH-independent). This Oryctolagus cuniculus (Rabbit) protein is Cytochrome P450 1A1 (CYP1A1).